Here is a 198-residue protein sequence, read N- to C-terminus: NAD(P)H dehydrogenase (quinone) (198 aa).

Residues 4-189 (VLVLYYSMYG…SIARYQGEYV (186 aa)) enclose the Flavodoxin-like domain. FMN-binding positions include 10-15 (SMYGHI) and 78-80 (TRF). An NAD(+)-binding site is contributed by Tyr12. Trp98 serves as a coordination point for substrate. FMN is bound by residues 113-118 (STGTGG) and His133.

It belongs to the WrbA family. It depends on FMN as a cofactor.

The catalysed reaction is a quinone + NADH + H(+) = a quinol + NAD(+). It carries out the reaction a quinone + NADPH + H(+) = a quinol + NADP(+). The protein is NAD(P)H dehydrogenase (quinone) of Shigella dysenteriae serotype 1 (strain Sd197).